The primary structure comprises 215 residues: Ribulose-phosphate 3-epimerase (215 aa).

Serine 13 is a substrate binding site. 4 residues coordinate a divalent metal cation: histidine 38, aspartate 40, histidine 69, and aspartate 175. Aspartate 40 acts as the Proton acceptor in catalysis. Substrate contacts are provided by residues histidine 69, aspartate 175–glycine 177, and glycine 196–serine 197. Aspartate 175 functions as the Proton donor in the catalytic mechanism.

It belongs to the ribulose-phosphate 3-epimerase family. It depends on a divalent metal cation as a cofactor.

The enzyme catalyses D-ribulose 5-phosphate = D-xylulose 5-phosphate. The protein operates within carbohydrate degradation. Its function is as follows. Catalyzes the reversible epimerization of D-ribulose 5-phosphate to D-xylulose 5-phosphate. This Mycoplasma pneumoniae (strain ATCC 29342 / M129 / Subtype 1) (Mycoplasmoides pneumoniae) protein is Ribulose-phosphate 3-epimerase.